Here is a 303-residue protein sequence, read N- to C-terminus: Sulfate adenylyltransferase subunit 2 (303 aa).

The protein belongs to the PAPS reductase family. CysD subfamily. In terms of assembly, heterodimer composed of CysD, the smaller subunit, and CysN.

It carries out the reaction sulfate + ATP + H(+) = adenosine 5'-phosphosulfate + diphosphate. It functions in the pathway sulfur metabolism; hydrogen sulfide biosynthesis; sulfite from sulfate: step 1/3. Functionally, with CysN forms the ATP sulfurylase (ATPS) that catalyzes the adenylation of sulfate producing adenosine 5'-phosphosulfate (APS) and diphosphate, the first enzymatic step in sulfur assimilation pathway. APS synthesis involves the formation of a high-energy phosphoric-sulfuric acid anhydride bond driven by GTP hydrolysis by CysN coupled to ATP hydrolysis by CysD. The polypeptide is Sulfate adenylyltransferase subunit 2 (Sulfurovum sp. (strain NBC37-1)).